The primary structure comprises 385 residues: Queuine tRNA-ribosyltransferase (385 aa).

Aspartate 92 (proton acceptor) is an active-site residue. Residues 92-96 (DSGGF), aspartate 146, glutamine 188, and glycine 215 contribute to the substrate site. An RNA binding region spans residues 246–252 (GVGHPED). The Nucleophile role is filled by aspartate 265. The RNA binding; important for wobble base 34 recognition stretch occupies residues 270–274 (TRTGR). Zn(2+) contacts are provided by cysteine 303, cysteine 305, cysteine 308, and histidine 334.

It belongs to the queuine tRNA-ribosyltransferase family. As to quaternary structure, homodimer. Within each dimer, one monomer is responsible for RNA recognition and catalysis, while the other monomer binds to the replacement base PreQ1. The cofactor is Zn(2+).

The enzyme catalyses 7-aminomethyl-7-carbaguanine + guanosine(34) in tRNA = 7-aminomethyl-7-carbaguanosine(34) in tRNA + guanine. Its pathway is tRNA modification; tRNA-queuosine biosynthesis. Catalyzes the base-exchange of a guanine (G) residue with the queuine precursor 7-aminomethyl-7-deazaguanine (PreQ1) at position 34 (anticodon wobble position) in tRNAs with GU(N) anticodons (tRNA-Asp, -Asn, -His and -Tyr). Catalysis occurs through a double-displacement mechanism. The nucleophile active site attacks the C1' of nucleotide 34 to detach the guanine base from the RNA, forming a covalent enzyme-RNA intermediate. The proton acceptor active site deprotonates the incoming PreQ1, allowing a nucleophilic attack on the C1' of the ribose to form the product. After dissociation, two additional enzymatic reactions on the tRNA convert PreQ1 to queuine (Q), resulting in the hypermodified nucleoside queuosine (7-(((4,5-cis-dihydroxy-2-cyclopenten-1-yl)amino)methyl)-7-deazaguanosine). This chain is Queuine tRNA-ribosyltransferase, found in Thermus thermophilus (strain ATCC 27634 / DSM 579 / HB8).